Consider the following 402-residue polypeptide: 1-deoxy-D-xylulose 5-phosphate reductoisomerase (402 aa).

8 residues coordinate NADPH: Thr-10, Gly-11, Ser-12, Ile-13, Gly-36, Arg-37, Asn-38, and Asn-124. Lys-125 is a binding site for 1-deoxy-D-xylulose 5-phosphate. Residue Glu-126 participates in NADPH binding. Residue Asp-150 participates in Mn(2+) binding. 1-deoxy-D-xylulose 5-phosphate-binding residues include Ser-151, Glu-152, Ser-186, and His-209. Glu-152 is a binding site for Mn(2+). Residue Gly-215 participates in NADPH binding. Ser-222, Asn-227, Lys-228, and Glu-231 together coordinate 1-deoxy-D-xylulose 5-phosphate. Glu-231 serves as a coordination point for Mn(2+).

The protein belongs to the DXR family. Mg(2+) serves as cofactor. The cofactor is Mn(2+).

It catalyses the reaction 2-C-methyl-D-erythritol 4-phosphate + NADP(+) = 1-deoxy-D-xylulose 5-phosphate + NADPH + H(+). Its pathway is isoprenoid biosynthesis; isopentenyl diphosphate biosynthesis via DXP pathway; isopentenyl diphosphate from 1-deoxy-D-xylulose 5-phosphate: step 1/6. With respect to regulation, inhibited by fosmidomycin. In terms of biological role, catalyzes the NADPH-dependent rearrangement and reduction of 1-deoxy-D-xylulose-5-phosphate (DXP) to 2-C-methyl-D-erythritol 4-phosphate (MEP). The chain is 1-deoxy-D-xylulose 5-phosphate reductoisomerase from Synechococcus sp. (strain ATCC 27144 / PCC 6301 / SAUG 1402/1) (Anacystis nidulans).